The sequence spans 137 residues: uncharacterized protein (137 aa).

The next 2 helical transmembrane spans lie at 36–52 and 113–129; these read LAPPADVCIFFLFPFVL and FYGYVPIFSAFGIIFCF.

The protein resides in the membrane. This is an uncharacterized protein from Saccharomyces cerevisiae (strain ATCC 204508 / S288c) (Baker's yeast).